The primary structure comprises 374 residues: DNA primase small subunit PriS (374 aa).

Residues D99, D101, and D281 contribute to the active site.

Belongs to the eukaryotic-type primase small subunit family. Heterodimer of a small subunit (PriS) and a large subunit (PriL). It depends on Mg(2+) as a cofactor. Requires Mn(2+) as cofactor.

Functionally, catalytic subunit of DNA primase, an RNA polymerase that catalyzes the synthesis of short RNA molecules used as primers for DNA polymerase during DNA replication. The small subunit contains the primase catalytic core and has DNA synthesis activity on its own. Binding to the large subunit stabilizes and modulates the activity, increasing the rate of DNA synthesis while decreasing the length of the DNA fragments, and conferring RNA synthesis capability. The DNA polymerase activity may enable DNA primase to also catalyze primer extension after primer synthesis. May also play a role in DNA repair. The chain is DNA primase small subunit PriS from Methanoregula boonei (strain DSM 21154 / JCM 14090 / 6A8).